The following is a 376-amino-acid chain: Putative phosphoserine aminotransferase (376 aa).

Arg50 is an L-glutamate binding site. Pyridoxal 5'-phosphate is bound by residues Ala84 to Thr85, Phe108, Thr154, Asp176, and Gln199. At Lys200 the chain carries N6-(pyridoxal phosphate)lysine. Asn251–Thr252 lines the pyridoxal 5'-phosphate pocket.

It belongs to the class-V pyridoxal-phosphate-dependent aminotransferase family. SerC subfamily. Homodimer. Pyridoxal 5'-phosphate is required as a cofactor.

Its subcellular location is the cytoplasm. It carries out the reaction O-phospho-L-serine + 2-oxoglutarate = 3-phosphooxypyruvate + L-glutamate. The catalysed reaction is 4-(phosphooxy)-L-threonine + 2-oxoglutarate = (R)-3-hydroxy-2-oxo-4-phosphooxybutanoate + L-glutamate. Its pathway is amino-acid biosynthesis; L-serine biosynthesis; L-serine from 3-phospho-D-glycerate: step 2/3. The protein operates within cofactor biosynthesis; pyridoxine 5'-phosphate biosynthesis; pyridoxine 5'-phosphate from D-erythrose 4-phosphate: step 3/5. In terms of biological role, catalyzes the reversible conversion of 3-phosphohydroxypyruvate to phosphoserine and of 3-hydroxy-2-oxo-4-phosphonooxybutanoate to phosphohydroxythreonine. This chain is Putative phosphoserine aminotransferase, found in Mycobacterium bovis (strain ATCC BAA-935 / AF2122/97).